The sequence spans 293 residues: Acetylglutamate kinase (293 aa).

Substrate-binding positions include 68-69 (GG), Arg90, and Asn189.

Belongs to the acetylglutamate kinase family. ArgB subfamily.

The protein resides in the cytoplasm. The enzyme catalyses N-acetyl-L-glutamate + ATP = N-acetyl-L-glutamyl 5-phosphate + ADP. It participates in amino-acid biosynthesis; L-arginine biosynthesis; N(2)-acetyl-L-ornithine from L-glutamate: step 2/4. Catalyzes the ATP-dependent phosphorylation of N-acetyl-L-glutamate. The chain is Acetylglutamate kinase from Mycolicibacterium smegmatis (strain ATCC 700084 / mc(2)155) (Mycobacterium smegmatis).